Reading from the N-terminus, the 120-residue chain is NAD(P)H-quinone oxidoreductase subunit 3, chloroplastic (120 aa).

3 helical membrane passes run Ile9–Gly29, Met64–Met84, and Val88–Leu108.

This sequence belongs to the complex I subunit 3 family. In terms of assembly, NDH is composed of at least 16 different subunits, 5 of which are encoded in the nucleus.

The protein localises to the plastid. It localises to the chloroplast thylakoid membrane. It carries out the reaction a plastoquinone + NADH + (n+1) H(+)(in) = a plastoquinol + NAD(+) + n H(+)(out). It catalyses the reaction a plastoquinone + NADPH + (n+1) H(+)(in) = a plastoquinol + NADP(+) + n H(+)(out). Its function is as follows. NDH shuttles electrons from NAD(P)H:plastoquinone, via FMN and iron-sulfur (Fe-S) centers, to quinones in the photosynthetic chain and possibly in a chloroplast respiratory chain. The immediate electron acceptor for the enzyme in this species is believed to be plastoquinone. Couples the redox reaction to proton translocation, and thus conserves the redox energy in a proton gradient. This Lupinus luteus (European yellow lupine) protein is NAD(P)H-quinone oxidoreductase subunit 3, chloroplastic.